The primary structure comprises 212 residues: Small ribosomal subunit protein uS2 (212 aa).

The tract at residues 190 to 212 is disordered; sequence LSPDAPEDQPAPVSEFETKVKMV.

It belongs to the universal ribosomal protein uS2 family.

In Ignicoccus hospitalis (strain KIN4/I / DSM 18386 / JCM 14125), this protein is Small ribosomal subunit protein uS2.